The primary structure comprises 375 residues: Succinyl-diaminopimelate desuccinylase (375 aa).

Residue H66 coordinates Zn(2+). The active site involves D68. Residue D99 participates in Zn(2+) binding. E133 (proton acceptor) is an active-site residue. Zn(2+) is bound by residues E134, E162, and H348.

The protein belongs to the peptidase M20A family. DapE subfamily. In terms of assembly, homodimer. Zn(2+) serves as cofactor. It depends on Co(2+) as a cofactor.

It catalyses the reaction N-succinyl-(2S,6S)-2,6-diaminopimelate + H2O = (2S,6S)-2,6-diaminopimelate + succinate. The protein operates within amino-acid biosynthesis; L-lysine biosynthesis via DAP pathway; LL-2,6-diaminopimelate from (S)-tetrahydrodipicolinate (succinylase route): step 3/3. Catalyzes the hydrolysis of N-succinyl-L,L-diaminopimelic acid (SDAP), forming succinate and LL-2,6-diaminopimelate (DAP), an intermediate involved in the bacterial biosynthesis of lysine and meso-diaminopimelic acid, an essential component of bacterial cell walls. The polypeptide is Succinyl-diaminopimelate desuccinylase (Salmonella dublin (strain CT_02021853)).